A 501-amino-acid polypeptide reads, in one-letter code: Protein YLS7 (501 aa).

Residues 25–45 traverse the membrane as a helical; Signal-anchor for type II membrane protein segment; sequence IAFAIGGLTSFVIFASLLLFT. Residues 69–131 form a disordered region; sequence HSIHDPDRNP…NVSIDEEATQ (63 aa). Residues 78 to 89 show a composition bias toward low complexity; sequence PSPVSSSESPPV. Positions 94–113 are enriched in basic and acidic residues; the sequence is SDDKVLPKGSHDSNDVRLGE. Positions 114–124 are enriched in polar residues; the sequence is ETNSGKSSNVS. Residues 211–213 carry the GDS motif motif; that stretch reads GDS. The tract at residues 438 to 467 is disordered; it reads RHDGHPGPYRSPDPKKITKRGPDGQPPPQD. Over residues 449–459 the composition is skewed to basic and acidic residues; the sequence is PDPKKITKRGP. The short motif at 467–481 is the DCXHWCLPGXXDXWN motif element; sequence DCLHWCMPGPVDTWN.

It belongs to the PC-esterase family. TBL subfamily. As to expression, expressed in roots, cauline leaves and flowers.

It is found in the membrane. Its function is as follows. May act as a bridging protein that binds pectin and other cell wall polysaccharides. Probably involved in maintaining esterification of pectins. May be involved in the specific O-acetylation of cell wall polymers. The polypeptide is Protein YLS7 (YLS7) (Arabidopsis thaliana (Mouse-ear cress)).